A 246-amino-acid chain; its full sequence is Probable transcriptional regulatory protein GK2594 (246 aa).

The protein belongs to the TACO1 family.

The protein resides in the cytoplasm. This Geobacillus kaustophilus (strain HTA426) protein is Probable transcriptional regulatory protein GK2594.